A 1033-amino-acid polypeptide reads, in one-letter code: uncharacterized protein (1033 aa).

Coiled-coil stretches lie at residues 212 to 326 (EIFK…KMNN), 405 to 582 (ILNN…LYKF), 615 to 771 (LEKE…LKLN), and 797 to 1019 (KMKI…NIDN).

This is an uncharacterized protein from Plasmodium falciparum (isolate 3D7).